Reading from the N-terminus, the 101-residue chain is Large ribosomal subunit protein uL24 (101 aa).

Belongs to the universal ribosomal protein uL24 family. As to quaternary structure, part of the 50S ribosomal subunit.

In terms of biological role, one of two assembly initiator proteins, it binds directly to the 5'-end of the 23S rRNA, where it nucleates assembly of the 50S subunit. Its function is as follows. One of the proteins that surrounds the polypeptide exit tunnel on the outside of the subunit. This Ruegeria sp. (strain TM1040) (Silicibacter sp.) protein is Large ribosomal subunit protein uL24.